The primary structure comprises 371 residues: uncharacterized protein (371 aa).

Belongs to the glycerate kinase type-1 family.

This is an uncharacterized protein from Synechocystis sp. (strain ATCC 27184 / PCC 6803 / Kazusa).